The following is a 1785-amino-acid chain: Mellein synthase (1785 aa).

The segment at 1-36 is disordered; that stretch reads MATPDDPATPALSLSASNSSSPTAASSVPPPTGTSE. A compositionally biased stretch (low complexity) spans 8–27; sequence ATPALSLSASNSSSPTAASS. The Ketosynthase family 3 (KS3) domain occupies 39–464; sequence YDDVAIIGMS…GTVSHAIIEQ (426 aa). Active-site for beta-ketoacyl synthase activity residues include C211, H346, and H386. Residues 575–888 form a malonyl-CoA:ACP transacylase (MAT) domain region; sequence VWVFSGHGSH…AVAQLWTKGV (314 aa). The For malonyltransferase activity role is filled by S661. The interval 933–1047 is N-terminal hotdog fold; the sequence is NNMLGQRMVV…ASWENEPSAN (115 aa). The region spanning 933 to 1206 is the PKS/mFAS DH domain; the sequence is NNMLGQRMVV…FTEVEATPTK (274 aa). The dehydratase (DH) domain stretch occupies residues 935–1203; sequence MLGQRMVVAG…SIRFTEVEAT (269 aa). H965 (proton acceptor; for dehydratase activity) is an active-site residue. The segment at 1062-1206 is C-terminal hotdog fold; that stretch reads GTRVSETFSV…FTEVEATPTK (145 aa). The Proton donor; for dehydratase activity role is filled by D1123. The segment at 1418-1608 is ketoreductase (KR) domain; the sequence is GTYVLTGGLG…AIAFQWTAWR (191 aa). Polar residues predominate over residues 1681 to 1698; the sequence is QDQSAPASGNASDSSGRP. Residues 1681–1701 are disordered; the sequence is QDQSAPASGNASDSSGRPTAS. A Carrier domain is found at 1706–1781; it reads PWLDVKIREC…AMVGWFQKQF (76 aa). At S1741 the chain carries O-(pantetheine 4'-phosphoryl)serine.

It participates in secondary metabolite biosynthesis. Functionally, polyketide synthase that produces (R)-mellein, a secondary metabolite that inhibits the germination of wheat (Triticum aestivum) and barrel medic (Medicago truncatula) seeds. Condensates 1 acetate starter unit and 4 extender malonate units. The nascent pentaketide intermediate then undergoes an aldol cyclization and is aromatized via dehydration. The (R)-O-methylmellein isolated from P.nodorum is most likely to be derived from (R)-mellein via an additional methylation at the hydroxyl group. Interestingly, no O-methyltransferase gene is encoded in the vicinity of MLNS on the chromosome. Thus, the O-methylation is likely to be catalyzed by an endogenous O-methyltransferase encoded elsewhere in the genome of P.nodorum. This Phaeosphaeria nodorum (strain SN15 / ATCC MYA-4574 / FGSC 10173) (Glume blotch fungus) protein is Mellein synthase.